A 381-amino-acid polypeptide reads, in one-letter code: Succinyl-diaminopimelate desuccinylase (381 aa).

Zn(2+) is bound at residue H71. D73 is a catalytic residue. Zn(2+) is bound at residue D104. The Proton acceptor role is filled by E138. Zn(2+) contacts are provided by E139, E167, and H353.

The protein belongs to the peptidase M20A family. DapE subfamily. As to quaternary structure, homodimer. Zn(2+) is required as a cofactor. The cofactor is Co(2+).

The enzyme catalyses N-succinyl-(2S,6S)-2,6-diaminopimelate + H2O = (2S,6S)-2,6-diaminopimelate + succinate. It participates in amino-acid biosynthesis; L-lysine biosynthesis via DAP pathway; LL-2,6-diaminopimelate from (S)-tetrahydrodipicolinate (succinylase route): step 3/3. Functionally, catalyzes the hydrolysis of N-succinyl-L,L-diaminopimelic acid (SDAP), forming succinate and LL-2,6-diaminopimelate (DAP), an intermediate involved in the bacterial biosynthesis of lysine and meso-diaminopimelic acid, an essential component of bacterial cell walls. The polypeptide is Succinyl-diaminopimelate desuccinylase (Shewanella pealeana (strain ATCC 700345 / ANG-SQ1)).